We begin with the raw amino-acid sequence, 703 residues long: Ion-translocating oxidoreductase complex subunit C (703 aa).

4Fe-4S ferredoxin-type domains lie at 368 to 397 (MAPQEQEQSCIRCGLCVDACPAGLLPQQLY) and 407 to 436 (KARNHNLFDCIECGACAFVCPSNIPLVQYY). Cys-377, Cys-380, Cys-383, Cys-387, Cys-416, Cys-419, Cys-422, and Cys-426 together coordinate [4Fe-4S] cluster. Disordered stretches follow at residues 505–558 (AVPA…EDPR) and 653–674 (AQQATAVETPAESPAVVTEEDP). Basic and acidic residues predominate over residues 524-539 (AAREARKAQARERRAQ).

It belongs to the 4Fe4S bacterial-type ferredoxin family. RnfC subfamily. The complex is composed of six subunits: RnfA, RnfB, RnfC, RnfD, RnfE and RnfG. Requires [4Fe-4S] cluster as cofactor.

The protein resides in the cell inner membrane. In terms of biological role, part of a membrane-bound complex that couples electron transfer with translocation of ions across the membrane. This chain is Ion-translocating oxidoreductase complex subunit C, found in Serratia proteamaculans (strain 568).